The primary structure comprises 302 residues: Pantothenate synthetase (302 aa).

30–37 serves as a coordination point for ATP; the sequence is MGALHGGH. His-37 (proton donor) is an active-site residue. Residue Gln-61 participates in (R)-pantoate binding. Gln-61 is a binding site for beta-alanine. Position 147 to 150 (147 to 150) interacts with ATP; the sequence is GEKD. Gln-153 lines the (R)-pantoate pocket. ATP contacts are provided by residues Val-176 and 184 to 187; that span reads KSSR.

The protein belongs to the pantothenate synthetase family. In terms of assembly, homodimer.

The protein localises to the cytoplasm. The catalysed reaction is (R)-pantoate + beta-alanine + ATP = (R)-pantothenate + AMP + diphosphate + H(+). It functions in the pathway cofactor biosynthesis; (R)-pantothenate biosynthesis; (R)-pantothenate from (R)-pantoate and beta-alanine: step 1/1. In terms of biological role, catalyzes the condensation of pantoate with beta-alanine in an ATP-dependent reaction via a pantoyl-adenylate intermediate. In Shouchella clausii (strain KSM-K16) (Alkalihalobacillus clausii), this protein is Pantothenate synthetase.